Reading from the N-terminus, the 109-residue chain is Flagellar hook-basal body complex protein FliE (109 aa).

Belongs to the FliE family.

Its subcellular location is the bacterial flagellum basal body. This is Flagellar hook-basal body complex protein FliE from Pseudomonas paraeruginosa (strain DSM 24068 / PA7) (Pseudomonas aeruginosa (strain PA7)).